The chain runs to 86 residues: Toxin Tpa4 (86 aa).

An N-terminal signal peptide occupies residues 1-19; it reads MNYFVLIAVACLLTAGTES. Positions 21–82 constitute an LCN-type CS-alpha/beta domain; sequence KDGYPLEYDN…EPIKTSGRCR (62 aa). Intrachain disulfides connect Cys-31–Cys-81, Cys-35–Cys-57, Cys-43–Cys-64, and Cys-47–Cys-66. Pro-83 is subject to Proline amide.

This sequence belongs to the long (4 C-C) scorpion toxin superfamily. Sodium channel inhibitor family. Alpha subfamily. As to expression, expressed by the venom gland.

The protein resides in the secreted. Functionally, alpha toxins bind voltage-independently at site-3 of sodium channels (Nav) and inhibit the inactivation of the activated channels, thereby blocking neuronal transmission. This is Toxin Tpa4 from Tityus pachyurus (Colombian scorpion).